Consider the following 537-residue polypeptide: Hydroxylamine reductase (537 aa).

[4Fe-4S] cluster contacts are provided by Cys-3, Cys-6, Cys-15, and Cys-21. Residues His-239, Glu-263, Cys-307, Cys-393, Cys-421, Cys-446, Glu-480, and Lys-482 each contribute to the hybrid [4Fe-2O-2S] cluster site. A Cysteine persulfide modification is found at Cys-393.

It belongs to the HCP family. [4Fe-4S] cluster is required as a cofactor. Requires hybrid [4Fe-2O-2S] cluster as cofactor.

It localises to the cytoplasm. It carries out the reaction A + NH4(+) + H2O = hydroxylamine + AH2 + H(+). Its function is as follows. Catalyzes the reduction of hydroxylamine to form NH(3) and H(2)O. This chain is Hydroxylamine reductase, found in Lawsonia intracellularis (strain PHE/MN1-00).